The primary structure comprises 82 residues: Small ribosomal subunit protein uS17 (82 aa).

This sequence belongs to the universal ribosomal protein uS17 family. As to quaternary structure, part of the 30S ribosomal subunit.

Functionally, one of the primary rRNA binding proteins, it binds specifically to the 5'-end of 16S ribosomal RNA. The polypeptide is Small ribosomal subunit protein uS17 (Pelobacter propionicus (strain DSM 2379 / NBRC 103807 / OttBd1)).